A 357-amino-acid polypeptide reads, in one-letter code: Malonyl CoA reductase (NADP) (357 aa).

13–16 is an NADP(+) binding site; that stretch reads TGLV. Catalysis depends on Cys-150, which acts as the Acyl-thioester intermediate. 180–181 serves as a coordination point for NADP(+); that stretch reads SG. His-245 functions as the Proton acceptor in the catalytic mechanism. 332-333 provides a ligand contact to NADP(+); sequence NT.

Belongs to the aspartate-semialdehyde dehydrogenase family. In terms of assembly, homotetramer.

The enzyme catalyses 3-oxopropanoate + NADP(+) + CoA = malonyl-CoA + NADPH + H(+). Functionally, catalyzes the reduction of malonyl-CoA to malonate semialdehyde, a key step in the 3-hydroxypropanoate and the 3-hydroxypropanoate/4-hydroxybutyrate cycles. The polypeptide is Malonyl CoA reductase (NADP) (Metallosphaera sedula (strain ATCC 51363 / DSM 5348 / JCM 9185 / NBRC 15509 / TH2)).